The chain runs to 452 residues: Protein MLF3 (452 aa).

Phosphoserine is present on residues S8, S11, S14, S56, S74, and S79. A disordered region spans residues 61–94 (SGSEVRTPSLRKNSNNVSSPLDNVIPTSRSASNS). Polar residues predominate over residues 64–81 (EVRTPSLRKNSNNVSSPL). T121 is subject to Phosphothreonine. Phosphoserine is present on residues S145, S156, and S160. T169 bears the Phosphothreonine mark. At S171 the chain carries Phosphoserine. Over residues 171-182 (SATLPSSESSPA) the composition is skewed to polar residues. The interval 171–220 (SATLPSSESSPASPDLKLSRSHSHSAATRPTLNNINNTGMTTTTSNGEPN) is disordered. T173 is modified (phosphothreonine). Phosphoserine occurs at positions 183 and 189. Residues 201-216 (TLNNINNTGMTTTTSN) show a composition bias toward low complexity. Phosphotyrosine is present on Y227. S228, S257, and S265 each carry phosphoserine. 2 disordered regions span residues 290–321 (PATS…NRSS) and 348–402 (IESS…AIGK). Y295 is subject to Phosphotyrosine. Phosphoserine occurs at positions 297, 320, and 353. Residues 299–321 (QQSARQYSNNANNNAKSPKNRSS) show a composition bias toward low complexity. Residues 365-383 (PSFPLSSSLRSSANLASNP) show a composition bias toward low complexity. A compositionally biased stretch (polar residues) spans 384-398 (ELATQTPLSTSSSYT). S439 is subject to Phosphoserine.

To yeast VHS2.

The protein localises to the cytoplasm. In Saccharomyces cerevisiae (strain ATCC 204508 / S288c) (Baker's yeast), this protein is Protein MLF3 (MLF3).